A 1442-amino-acid polypeptide reads, in one-letter code: Clustered mitochondria protein homolog (1442 aa).

2 disordered regions span residues 38 to 100 (NYRN…KKPD) and 237 to 258 (GRSE…KDRP). Over residues 82 to 100 (SEGEQQKDKTAAEDKKKPD) the composition is skewed to basic and acidic residues. One can recognise a Clu domain in the interval 394–636 (RAEDTFSSKL…RTFPPDVNFL (243 aa)). Composition is skewed to basic and acidic residues over residues 696-714 (QKQE…EPKA) and 737-763 (ESKE…KVET). 2 disordered regions span residues 696 to 763 (QKQE…KVET) and 949 to 984 (SESD…SFQC). The segment covering 949–958 (SESDALTKSG) has biased composition (polar residues). TPR repeat units lie at residues 1087 to 1120 (AYNF…LNNV), 1213 to 1246 (ALLD…NIKY), and 1248 to 1281 (GEKS…EKET). The disordered stretch occupies residues 1373-1442 (RQKEGGTSEQ…SSNASAQQVS (70 aa)). The span at 1380-1390 (SEQAAAAQASQ) shows a compositional bias: low complexity. Polar residues predominate over residues 1424-1442 (ASSSKQADNSSNASAQQVS).

The protein belongs to the CLU family.

It is found in the cytoplasm. MRNA-binding protein involved in proper cytoplasmic distribution of mitochondria. In Aedes aegypti (Yellowfever mosquito), this protein is Clustered mitochondria protein homolog.